A 343-amino-acid chain; its full sequence is Melanoma-associated antigen B18 (343 aa).

Residues 1 to 17 (MPRGQKSKLRAREKRHQ) are compositionally biased toward basic residues. The interval 1 to 102 (MPRGQKSKLR…LGSSREAEGW (102 aa)) is disordered. Residues 67 to 87 (APSTTNAIAPVSCSSNEGASS) are compositionally biased toward polar residues. The segment covering 88-102 (QDEKSLGSSREAEGW) has biased composition (basic and acidic residues). Residues 100–343 (EGWKEDPLNK…TTSSSFSHAK (244 aa)) form an interaction with LNX1 region. The MAGE domain maps to 107–306 (LNKKVVSLVH…SAFPSCYEEA (200 aa)). Residues 313–343 (RTQARAAARAHTAAMANARSRTTSSSFSHAK) form a disordered region. Low complexity predominate over residues 316 to 333 (ARAAARAHTAAMANARSR). A compositionally biased stretch (polar residues) spans 334-343 (TTSSSFSHAK).

As to quaternary structure, interacts with LNX1.

The protein resides in the cytoplasm. In terms of biological role, may enhance ubiquitin ligase activity of RING-type zinc finger-containing E3 ubiquitin-protein ligases. Proposed to act through recruitment and/or stabilization of the Ubl-conjugating enzyme (E2) at the E3:substrate complex. This is Melanoma-associated antigen B18 (MAGEB18) from Homo sapiens (Human).